A 1222-amino-acid chain; its full sequence is Serine/threonine-protein kinase WNK4 (1222 aa).

Polar residues predominate over residues 1 to 17 (MLAPRNTETGVHMSQTE). The interval 1-163 (MLAPRNTETG…KEDTETQAVA (163 aa)) is disordered. Residue serine 95 is modified to Phosphoserine. The segment covering 135 to 152 (EPPRVPDAAARERRREQE) has biased composition (basic and acidic residues). Residues lysine 154 and lysine 172 each participate in a glycyl lysine isopeptide (Lys-Gly) (interchain with G-Cter in ubiquitin) cross-link. The Protein kinase domain occupies 171–429 (LKFDIEIGRG…IQDLLTHAFF (259 aa)). Serine 181 is a binding site for ATP. Residues lysine 183, lysine 223, and lysine 238 each participate in a glycyl lysine isopeptide (Lys-Gly) (interchain with G-Cter in ubiquitin) cross-link. ATP contacts are provided by residues 251–254 (TELM) and lysine 301. Aspartate 318 acts as the Proton acceptor in catalysis. Lysine 325 is covalently cross-linked (Glycyl lysine isopeptide (Lys-Gly) (interchain with G-Cter in ubiquitin)). A phosphoserine; by autocatalysis mark is found at serine 328 and serine 332. Glycyl lysine isopeptide (Lys-Gly) (interchain with G-Cter in ubiquitin) cross-links involve residues lysine 384, lysine 390, lysine 447, and lysine 451. Residues 527–562 (LEVLPPDSGPPPATVSMTPGPPSAFPPEPEEPEADQ) form a disordered region. Residues 533 to 553 (DSGPPPATVSMTPGPPSAFPP) are compositionally biased toward pro residues. Residues 554–564 (EPEEPEADQHQ) are interaction with KLHL3. Serine 572 carries the post-translational modification Phosphoserine. 5 disordered regions span residues 591-612 (FLDASDPALQPPGGMPSSPAEP), 626-679 (RSGP…SVSD), 747-809 (DAGP…GTPF), 836-873 (QVSSNPCPQAPSSLLPSSSGASQVPFPSPSLPTSSPLP), and 927-1087 (SPGL…QPSP). Residues 627–638 (SGPGSDFSPGDS) show a composition bias toward low complexity. Positions 659-672 (NPVKTLRRRPRSRL) are enriched in basic residues. 2 stretches are compositionally biased toward low complexity: residues 792 to 809 (FSTSPSSPGTPLSPGTPF) and 845 to 873 (APSSLLPSSSGASQVPFPSPSLPTSSPLP). A compositionally biased stretch (pro residues) spans 935–946 (PPAPPGPLPSMP). Residues 953 to 963 (DQESLSAQTAE) are compositionally biased toward polar residues. Lysine 990 is covalently cross-linked (Glycyl lysine isopeptide (Lys-Gly) (interchain with G-Cter in ubiquitin)). The RFXV motif signature appears at 996–999 (RFQV). Serine 1014 carries the post-translational modification Phosphoserine. Over residues 1044–1056 (ETREALAESDRAA) the composition is skewed to basic and acidic residues. Residues 1076–1086 (GGSSPILSQPS) show a composition bias toward polar residues. Glycyl lysine isopeptide (Lys-Gly) (interchain with G-Cter in ubiquitin) cross-links involve residues lysine 1123, lysine 1136, and lysine 1137. The tract at residues 1169-1222 (SKGSFPTSRRNSLQRSDLPGPGIMRRNSLSGSSTGSQEQRASKGVTFAGDVGRM) is disordered. Composition is skewed to polar residues over residues 1172 to 1183 (SFPTSRRNSLQR) and 1195 to 1207 (NSLSGSSTGSQEQ). A Phosphoserine modification is found at serine 1196.

The protein belongs to the protein kinase superfamily. Ser/Thr protein kinase family. WNK subfamily. Interacts with the C-terminal region of KCNJ1. Interacts with WNK1 and WNK3. Interacts with KLHL3. Mg(2+) is required as a cofactor. Autophosphorylated at Ser-328 and Ser-332, promoting its activation. Phosphorylated by WNK1 and WNK3. Phosphorylated at Ser-572 in a MAP3K15/ASK3-dependent process in response to osmotic stress or hypotonic low-chloride stimulation. Post-translationally, ubiquitinated by the BCR(KLHL3) complex, leading to its degradation. Also ubiquitinated by the BCR(KLHL2) complex.

It localises to the cell junction. The protein localises to the tight junction. The enzyme catalyses L-seryl-[protein] + ATP = O-phospho-L-seryl-[protein] + ADP + H(+). It carries out the reaction L-threonyl-[protein] + ATP = O-phospho-L-threonyl-[protein] + ADP + H(+). With respect to regulation, activation requires autophosphorylation of Ser-328 and Ser-332. Autophosphorylation and subsequent activation is inhibited by increases in intracellular ionic strength: Cl(-) potently inhibits WNK4 kinase activity via direct binding. Also inhibited by K(+) ions. Functionally, serine/threonine-protein kinase component of the WNK4-SPAK/OSR1 kinase cascade, which acts as a key regulator of ion transport in the distal nephron and blood pressure. The WNK4-SPAK/OSR1 kinase cascade is composed of WNK4, which mediates phosphorylation and activation of downstream kinases OXSR1/OSR1 and STK39/SPAK. Following activation, OXSR1/OSR1 and STK39/SPAK catalyze phosphorylation of ion cotransporters, such as SLC12A1/NKCC2, SLC12A2/NKCC1, SLC12A3/NCC, SLC12A5/KCC2 or SLC12A6/KCC3, regulating their activity. Acts as a molecular switch that regulates the balance between renal salt reabsorption and K(+) secretion by modulating the activities of renal transporters and channels, including the Na-Cl cotransporter SLC12A3/NCC and the K(+) channel, KCNJ1/ROMK. Regulates NaCl reabsorption in the distal nephron by activating the thiazide-sensitive Na-Cl cotransporter SLC12A3/NCC in distal convoluted tubule cells of kidney: activates SLC12A3/NCC in a OXSR1/OSR1- and STK39/SPAK-dependent process. Also acts as a scaffold protein independently of its protein kinase activity: negatively regulates cell membrane localization of various transporters and channels (CFTR, KCNJ1/ROMK, SLC4A4, SLC26A9 and TRPV4) by clathrin-dependent endocytosis. Also inhibits the activity of the epithelial Na(+) channel (ENaC) SCNN1A, SCNN1B, SCNN1D in a inase-independent mechanism. May also phosphorylate NEDD4L. The polypeptide is Serine/threonine-protein kinase WNK4 (Rattus norvegicus (Rat)).